Consider the following 351-residue polypeptide: Photosystem II D2 protein (351 aa).

A helical membrane pass occupies residues 39–59; sequence CAFLALGGWLTGTTFVTSWYT. A chlorophyll a-binding site is contributed by histidine 116. Residues 123–139 traverse the membrane as a helical segment; sequence GFMLRQFEIARLVGIRP. Glutamine 128 and asparagine 141 together coordinate pheophytin a. A helical transmembrane segment spans residues 151-164; it reads VFVSVFLMYPLGQS. Residue histidine 196 coordinates chlorophyll a. A helical membrane pass occupies residues 206–226; it reads GALLCAIHGATVENTLFEDGE. Residues histidine 213 and phenylalanine 260 each coordinate a plastoquinone. Histidine 213 lines the Fe cation pocket. A Fe cation-binding site is contributed by histidine 267. A helical transmembrane segment spans residues 277-293; the sequence is GLWMSAVGIVGLALNLR.

The protein belongs to the reaction center PufL/M/PsbA/D family. In terms of assembly, PSII is composed of 1 copy each of membrane proteins PsbA, PsbB, PsbC, PsbD, PsbE, PsbF, PsbH, PsbI, PsbJ, PsbK, PsbL, PsbM, PsbT, PsbX, PsbY, PsbZ, Psb30/Ycf12, peripheral proteins PsbO, CyanoQ (PsbQ), PsbU, PsbV and a large number of cofactors. It forms dimeric complexes. It depends on The D1/D2 heterodimer binds P680, chlorophylls that are the primary electron donor of PSII, and subsequent electron acceptors. It shares a non-heme iron and each subunit binds pheophytin, quinone, additional chlorophylls, carotenoids and lipids. There is also a Cl(-1) ion associated with D1 and D2, which is required for oxygen evolution. The PSII complex binds additional chlorophylls, carotenoids and specific lipids. as a cofactor.

It localises to the cellular thylakoid membrane. It catalyses the reaction 2 a plastoquinone + 4 hnu + 2 H2O = 2 a plastoquinol + O2. Photosystem II (PSII) is a light-driven water:plastoquinone oxidoreductase that uses light energy to abstract electrons from H(2)O, generating O(2) and a proton gradient subsequently used for ATP formation. It consists of a core antenna complex that captures photons, and an electron transfer chain that converts photonic excitation into a charge separation. The D1/D2 (PsbA/PsbD) reaction center heterodimer binds P680, the primary electron donor of PSII as well as several subsequent electron acceptors. D2 is needed for assembly of a stable PSII complex. The sequence is that of Photosystem II D2 protein from Trichormus variabilis (strain ATCC 29413 / PCC 7937) (Anabaena variabilis).